The sequence spans 127 residues: Small ribosomal subunit protein uS11 (127 aa).

This sequence belongs to the universal ribosomal protein uS11 family. In terms of assembly, part of the 30S ribosomal subunit. Interacts with proteins S7 and S18. Binds to IF-3.

Its function is as follows. Located on the platform of the 30S subunit, it bridges several disparate RNA helices of the 16S rRNA. Forms part of the Shine-Dalgarno cleft in the 70S ribosome. This Chlorobaculum tepidum (strain ATCC 49652 / DSM 12025 / NBRC 103806 / TLS) (Chlorobium tepidum) protein is Small ribosomal subunit protein uS11.